The following is a 203-amino-acid chain: Large ribosomal subunit protein uL13 (203 aa).

Ala-2 carries the N-acetylalanine modification. Arg-59 carries the post-translational modification Citrulline. Ser-77 carries the phosphoserine modification. Position 140 is a citrulline (Arg-140). Lys-191 carries the N6-acetyllysine modification.

This sequence belongs to the universal ribosomal protein uL13 family. In terms of assembly, component of the 60S ribosome. Component of the GAIT complex. Interacts with EIF4G1. In terms of processing, phosphorylation at Ser-77 upon interferon-gamma treatment in macrophages involves a DAPK1-DAPK3 kinase cascade and is causing release from the ribosome, association with the GAIT complex and subsequent involvement in transcript-selective translation inhibition. Post-translationally, citrullinated by PADI4.

The protein localises to the cytoplasm. Functionally, associated with ribosomes but is not required for canonical ribosome function and has extra-ribosomal functions. Component of the GAIT (gamma interferon-activated inhibitor of translation) complex which mediates interferon-gamma-induced transcript-selective translation inhibition in inflammation processes. Upon interferon-gamma activation and subsequent phosphorylation dissociates from the ribosome and assembles into the GAIT complex which binds to stem loop-containing GAIT elements in the 3'-UTR of diverse inflammatory mRNAs (such as ceruplasmin) and suppresses their translation. In the GAIT complex interacts with m7G cap-bound eIF4G at or near the eIF3-binding site and blocks the recruitment of the 43S ribosomal complex. Involved in methylation of rRNA. This Bos taurus (Bovine) protein is Large ribosomal subunit protein uL13 (RPL13A).